The following is a 144-amino-acid chain: uncharacterized protein (144 aa).

The signal sequence occupies residues 1–23 (MVIPLRNKYGILFLIAVCIMVSG). The segment at 119 to 144 (QNGQRKTMTRIESKTGREEKDEKSKS) is disordered. A compositionally biased stretch (basic and acidic residues) spans 127-144 (TRIESKTGREEKDEKSKS).

This is an uncharacterized protein from Bacillus subtilis (strain 168).